Here is a 264-residue protein sequence, read N- to C-terminus: uncharacterized protein (264 aa).

The next 6 membrane-spanning stretches (helical) occupy residues 23–43, 59–79, 91–111, 150–170, 190–210, and 233–253; these read LIFL…TALI, FDTF…YYFL, LVLS…FYAL, FSEL…VGLL, AGIY…LNVW, and WIWS…LFVI.

Its subcellular location is the cell membrane. This is an uncharacterized protein from Mycoplasma genitalium (strain ATCC 33530 / DSM 19775 / NCTC 10195 / G37) (Mycoplasmoides genitalium).